We begin with the raw amino-acid sequence, 270 residues long: Imidazoleglycerol-phosphate dehydratase 1, chloroplastic (270 aa).

The N-terminal 62 residues, 1–62 (MELSSASAIL…QSQLRQSISC (62 aa)), are a transit peptide targeting the chloroplast. An N-acetylserine modification is found at S63. Residues E84, 110–118 (HMLDQLASH), 136–140 (HHTNE), R162, and R184 contribute to the substrate site. Positions 110, 136, 137, and 140 each coordinate Mn(2+). 4 residues coordinate Mn(2+): H208, H232, H233, and E236. Substrate is bound by residues 232-240 (HHIIEATFK) and 262-264 (SSK). Residues 250–270 (TETDPRRGGTIPSSKGVLSRS) form a disordered region.

The protein belongs to the imidazoleglycerol-phosphate dehydratase family. Mn(2+) serves as cofactor.

The protein resides in the plastid. It localises to the chloroplast. It carries out the reaction D-erythro-1-(imidazol-4-yl)glycerol 3-phosphate = 3-(imidazol-4-yl)-2-oxopropyl phosphate + H2O. Its pathway is amino-acid biosynthesis; L-histidine biosynthesis; L-histidine from 5-phospho-alpha-D-ribose 1-diphosphate: step 6/9. This is Imidazoleglycerol-phosphate dehydratase 1, chloroplastic from Arabidopsis thaliana (Mouse-ear cress).